Here is a 257-residue protein sequence, read N- to C-terminus: Acetylglutamate kinase (257 aa).

Substrate is bound by residues 40–41 (GG), Arg-62, and Asn-155.

Belongs to the acetylglutamate kinase family. ArgB subfamily.

Its subcellular location is the cytoplasm. The catalysed reaction is N-acetyl-L-glutamate + ATP = N-acetyl-L-glutamyl 5-phosphate + ADP. It functions in the pathway amino-acid biosynthesis; L-arginine biosynthesis; N(2)-acetyl-L-ornithine from L-glutamate: step 2/4. Catalyzes the ATP-dependent phosphorylation of N-acetyl-L-glutamate. This chain is Acetylglutamate kinase, found in Shouchella clausii (strain KSM-K16) (Alkalihalobacillus clausii).